We begin with the raw amino-acid sequence, 171 residues long: Secreted protein CSS3 (171 aa).

An N-terminal signal peptide occupies residues 1–20; it reads MVPLFGLFCIFSQLYSLCSA. N37, N139, and N159 each carry an N-linked (GlcNAc...) asparagine glycan.

It localises to the cytoplasm. It is found in the secreted. The chain is Secreted protein CSS3 from Saccharomyces cerevisiae (strain ATCC 204508 / S288c) (Baker's yeast).